The chain runs to 306 residues: D-aminoacyl-tRNA deacylase (306 aa).

This sequence belongs to the DtdA deacylase family. As to quaternary structure, monomer. Requires Zn(2+) as cofactor.

The catalysed reaction is a D-aminoacyl-tRNA + H2O = a tRNA + a D-alpha-amino acid + H(+). The enzyme catalyses glycyl-tRNA(Ala) + H2O = tRNA(Ala) + glycine + H(+). Its function is as follows. D-aminoacyl-tRNA deacylase with broad substrate specificity. By recycling D-aminoacyl-tRNA to D-amino acids and free tRNA molecules, this enzyme counteracts the toxicity associated with the formation of D-aminoacyl-tRNA entities in vivo. The protein is D-aminoacyl-tRNA deacylase of Methanosarcina barkeri (strain Fusaro / DSM 804).